The chain runs to 332 residues: Putative peptide import ATP-binding protein BruAb2_1033 (332 aa).

The 251-residue stretch at 11 to 261 (LEVSNLSVDF…PLHPYTEGLL (251 aa)) folds into the ABC transporter domain. 47-54 (GESGSGKS) lines the ATP pocket.

Belongs to the ABC transporter superfamily. In terms of assembly, the complex is composed of two ATP-binding proteins (BruAb2_1033 and BruAb2_1034), two transmembrane proteins (BruAb2_1031 and BruAb2_1032) and a solute-binding protein (BruAb2_1030).

It is found in the cell inner membrane. Functionally, probably part of an ABC transporter complex that could be involved in peptide import. Probably responsible for energy coupling to the transport system. The polypeptide is Putative peptide import ATP-binding protein BruAb2_1033 (Brucella abortus biovar 1 (strain 9-941)).